Consider the following 54-residue polypeptide: uncharacterized protein (54 aa).

The interval 1–38 is disordered; that stretch reads MFPNSNGPNKMKALVAPSNSSTTSKTNNNNLPPNGRSS. Over residues 17-38 the composition is skewed to low complexity; the sequence is PSNSSTTSKTNNNNLPPNGRSS.

This is an uncharacterized protein from Dictyostelium discoideum (Social amoeba).